We begin with the raw amino-acid sequence, 349 residues long: Protein O-mannose kinase (349 aa).

At 1–19 the chain is on the cytoplasmic side; that stretch reads MGQQHGARNGLTHRELPRG. The chain crosses the membrane as a helical; Signal-anchor for type II membrane protein span at residues 20–42; that stretch reads MGLLLAMALMNVVLYVCLDHLFI. The Lumenal portion of the chain corresponds to 43–349; the sequence is SPGRATEDPR…TVMSQTKEML (307 aa). N-linked (GlcNAc...) asparagine glycosylation is found at Asn66, Asn164, and Asn219. The region spanning 80–349 is the Protein kinase domain; sequence VRQLKLVGEG…TVMSQTKEML (270 aa).

It belongs to the protein kinase superfamily. Ser/Thr protein kinase family. STKL subfamily.

The protein localises to the endoplasmic reticulum membrane. The catalysed reaction is 3-O-[beta-D-GalNAc-(1-&gt;3)-beta-D-GlcNAc-(1-&gt;4)-alpha-D-Man]-L-Thr-[protein] + ATP = 3-O-[beta-D-GalNAc-(1-&gt;3)-beta-D-GlcNAc-(1-&gt;4)-(O-6-P-alpha-D-Man)]-Thr-[protein] + ADP + H(+). In terms of biological role, protein O-mannose kinase that specifically mediates phosphorylation at the 6-position of an O-mannose of the trisaccharide (N-acetylgalactosamine (GalNAc)-beta-1,3-N-acetylglucosamine (GlcNAc)-beta-1,4-mannose) to generate phosphorylated O-mannosyl trisaccharide (N-acetylgalactosamine-beta-1,3-N-acetylglucosamine-beta-1,4-(phosphate-6-)mannose). Phosphorylated O-mannosyl trisaccharide is a carbohydrate structure present in alpha-dystroglycan (DAG1), which is required for binding laminin G-like domain-containing extracellular proteins with high affinity. Only shows kinase activity when the GalNAc-beta-3-GlcNAc-beta-terminus is linked to the 4-position of O-mannose, suggesting that this disaccharide serves as the substrate recognition motif. This is Protein O-mannose kinase (Pomk) from Rattus norvegicus (Rat).